Here is a 98-residue protein sequence, read N- to C-terminus: UPF0235 protein MJ0618 (98 aa).

The protein belongs to the UPF0235 family.

In Methanocaldococcus jannaschii (strain ATCC 43067 / DSM 2661 / JAL-1 / JCM 10045 / NBRC 100440) (Methanococcus jannaschii), this protein is UPF0235 protein MJ0618.